Consider the following 269-residue polypeptide: tRNA (guanine-N(1)-)-methyltransferase (269 aa).

Residues G115 and 139 to 144 each bind S-adenosyl-L-methionine; that span reads LGDYVL.

The protein belongs to the RNA methyltransferase TrmD family. In terms of assembly, homodimer.

The protein resides in the cytoplasm. The enzyme catalyses guanosine(37) in tRNA + S-adenosyl-L-methionine = N(1)-methylguanosine(37) in tRNA + S-adenosyl-L-homocysteine + H(+). In terms of biological role, specifically methylates guanosine-37 in various tRNAs. The polypeptide is tRNA (guanine-N(1)-)-methyltransferase (Pseudarthrobacter chlorophenolicus (strain ATCC 700700 / DSM 12829 / CIP 107037 / JCM 12360 / KCTC 9906 / NCIMB 13794 / A6) (Arthrobacter chlorophenolicus)).